We begin with the raw amino-acid sequence, 426 residues long: MTQLTDAKSGIVTEEMKFVADEEKIDVNYLRKLIEKGYVVIPKNINRKTKPVGIGDNLRTKVNVNLGTSPDFIDISCELKKVEISNKYGADAIMDLSTGGNLPEIRSQIMKNTNLPIGTVPIYEVGVDSKEKYGRVIDMDEDLIFNVIERQAQEGVDFMTLHCGITKQSVDTLNKDPRKMGVVSRGGAFLTAYIMYHNKENPLYRDFDYLLEILKEHDVTLSLGDGMRPGCLQDNTDRAQIQELITLGELVDRCREKGVQVMVEGPGHVPYNNIQANMQIQKTICKNAPFYVLGPIVTDLAPGYDHITAAIGGTLAAVSGANFLCYVTPAEHVRLMKEEEVKEGLIASKIAAQAADVAKGNPVAWNKERQMADARIKHDWERQFEIALDSDKPKKMREEIPSKDEKACSVCGDYCALLMVEELGKR.

Substrate contacts are provided by residues N65, M94, Y123, H162, 184–186, 225–228, and E264; these read SRG and DGMR. Zn(2+) is bound at residue H268. Y291 is a binding site for substrate. Residue H332 participates in Zn(2+) binding. [4Fe-4S] cluster is bound by residues C408, C411, and C415.

Belongs to the ThiC family. [4Fe-4S] cluster serves as cofactor.

The enzyme catalyses 5-amino-1-(5-phospho-beta-D-ribosyl)imidazole + S-adenosyl-L-methionine = 4-amino-2-methyl-5-(phosphooxymethyl)pyrimidine + CO + 5'-deoxyadenosine + formate + L-methionine + 3 H(+). Its pathway is cofactor biosynthesis; thiamine diphosphate biosynthesis. Catalyzes the synthesis of the hydroxymethylpyrimidine phosphate (HMP-P) moiety of thiamine from aminoimidazole ribotide (AIR) in a radical S-adenosyl-L-methionine (SAM)-dependent reaction. The polypeptide is Phosphomethylpyrimidine synthase (Methanococcus vannielii (strain ATCC 35089 / DSM 1224 / JCM 13029 / OCM 148 / SB)).